We begin with the raw amino-acid sequence, 664 residues long: Chaperone protein dnaK1 (664 aa).

Phosphothreonine; by autocatalysis is present on Thr-198.

It belongs to the heat shock protein 70 family.

In terms of biological role, acts as a chaperone. This is Chaperone protein dnaK1 (dnaK1) from Prochlorococcus marinus (strain MIT 9313).